We begin with the raw amino-acid sequence, 120 residues long: UPF0102 protein NT01CX_2205 (120 aa).

The protein belongs to the UPF0102 family.

This Clostridium novyi (strain NT) protein is UPF0102 protein NT01CX_2205.